Consider the following 216-residue polypeptide: Octanoyltransferase (216 aa).

The BPL/LPL catalytic domain occupies 35-213 (NSNPDFIWIG…IIQEEFNFDF (179 aa)). Substrate contacts are provided by residues 77–84 (RGGEVTCH), 144–146 (SIG), and 157–159 (GFS). Residue cysteine 175 is the Acyl-thioester intermediate of the active site.

The protein belongs to the LipB family.

It localises to the cytoplasm. The enzyme catalyses octanoyl-[ACP] + L-lysyl-[protein] = N(6)-octanoyl-L-lysyl-[protein] + holo-[ACP] + H(+). Its pathway is protein modification; protein lipoylation via endogenous pathway; protein N(6)-(lipoyl)lysine from octanoyl-[acyl-carrier-protein]: step 1/2. Its function is as follows. Catalyzes the transfer of endogenously produced octanoic acid from octanoyl-acyl-carrier-protein onto the lipoyl domains of lipoate-dependent enzymes. Lipoyl-ACP can also act as a substrate although octanoyl-ACP is likely to be the physiological substrate. This is Octanoyltransferase from Prochlorococcus marinus (strain MIT 9215).